Consider the following 189-residue polypeptide: Lipid A acyltransferase PagP (189 aa).

The N-terminal stretch at methionine 1–alanine 23 is a signal peptide. Catalysis depends on residues histidine 61, aspartate 104, and serine 105.

Belongs to the lipid A palmitoyltransferase family. As to quaternary structure, homodimer.

The protein localises to the cell outer membrane. The catalysed reaction is a lipid A + a 1,2-diacyl-sn-glycero-3-phosphocholine = a hepta-acyl lipid A + a 2-acyl-sn-glycero-3-phosphocholine. It catalyses the reaction a lipid IVA + a 1,2-diacyl-sn-glycero-3-phosphocholine = a lipid IVB + a 2-acyl-sn-glycero-3-phosphocholine. It carries out the reaction a lipid IIA + a 1,2-diacyl-sn-glycero-3-phosphocholine = a lipid IIB + a 2-acyl-sn-glycero-3-phosphocholine. In terms of biological role, transfers a fatty acid residue from the sn-1 position of a phospholipid to the N-linked hydroxyfatty acid chain on the proximal unit of lipid A or its precursors. The polypeptide is Lipid A acyltransferase PagP (Erwinia amylovora (strain ATCC 49946 / CCPPB 0273 / Ea273 / 27-3)).